A 1524-amino-acid polypeptide reads, in one-letter code: Protein dispatched homolog 1 (1524 aa).

Asn-59 is a glycosylation site (N-linked (GlcNAc...) asparagine). 4 helical membrane passes run 190-210, 500-520, 525-545, and 549-569; these read VVVL…GVLV, LLMD…VMCV, MFIT…SYFL, and VFHF…LVGI. The 173-residue stretch at 486–658 folds into the SSD domain; it reads GIEFGIKHSL…VTWLPAVVVL (173 aa). A glycan (N-linked (GlcNAc...) asparagine) is linked at Asn-582. Helical transmembrane passes span 604 to 624, 638 to 658, 719 to 739, 988 to 1008, 1010 to 1030, 1040 to 1060, 1079 to 1099, and 1107 to 1127; these read AALS…ANYV, GTAI…VVVL, YLWL…VCIN, MGLS…NIII, LYAI…LVLL, VTIS…GVAY, VGSA…MMMP, and QLGT…TFFF.

This sequence belongs to the dispatched family. Interacts with SHH via the cholesterol anchor of the dually lipid-modified SHH (ShhNp).

It localises to the membrane. Functions in hedgehog (Hh) signaling. Regulates the release and extracellular accumulation of cholesterol-modified hedgehog proteins and is hence required for effective production of the Hh signal. Synergizes with SCUBE2 to cause an increase in SHH secretion. This Homo sapiens (Human) protein is Protein dispatched homolog 1 (DISP1).